A 370-amino-acid chain; its full sequence is Aminomethyltransferase (370 aa).

This sequence belongs to the GcvT family. In terms of assembly, the glycine cleavage system is composed of four proteins: P, T, L and H.

The enzyme catalyses N(6)-[(R)-S(8)-aminomethyldihydrolipoyl]-L-lysyl-[protein] + (6S)-5,6,7,8-tetrahydrofolate = N(6)-[(R)-dihydrolipoyl]-L-lysyl-[protein] + (6R)-5,10-methylene-5,6,7,8-tetrahydrofolate + NH4(+). Its function is as follows. The glycine cleavage system catalyzes the degradation of glycine. The sequence is that of Aminomethyltransferase from Clostridium botulinum (strain 657 / Type Ba4).